The sequence spans 159 residues: Crossover junction endodeoxyribonuclease RuvC (159 aa).

Catalysis depends on residues Asp7, Glu67, and Asp139. Mg(2+) is bound by residues Asp7, Glu67, and Asp139.

It belongs to the RuvC family. In terms of assembly, homodimer which binds Holliday junction (HJ) DNA. The HJ becomes 2-fold symmetrical on binding to RuvC with unstacked arms; it has a different conformation from HJ DNA in complex with RuvA. In the full resolvosome a probable DNA-RuvA(4)-RuvB(12)-RuvC(2) complex forms which resolves the HJ. Mg(2+) serves as cofactor.

The protein resides in the cytoplasm. The catalysed reaction is Endonucleolytic cleavage at a junction such as a reciprocal single-stranded crossover between two homologous DNA duplexes (Holliday junction).. In terms of biological role, the RuvA-RuvB-RuvC complex processes Holliday junction (HJ) DNA during genetic recombination and DNA repair. Endonuclease that resolves HJ intermediates. Cleaves cruciform DNA by making single-stranded nicks across the HJ at symmetrical positions within the homologous arms, yielding a 5'-phosphate and a 3'-hydroxyl group; requires a central core of homology in the junction. The consensus cleavage sequence is 5'-(A/T)TT(C/G)-3'. Cleavage occurs on the 3'-side of the TT dinucleotide at the point of strand exchange. HJ branch migration catalyzed by RuvA-RuvB allows RuvC to scan DNA until it finds its consensus sequence, where it cleaves and resolves the cruciform DNA. The sequence is that of Crossover junction endodeoxyribonuclease RuvC from Thermosynechococcus vestitus (strain NIES-2133 / IAM M-273 / BP-1).